The sequence spans 822 residues: Protein smoothened (822 aa).

Positions 1 to 28 are cleaved as a signal peptide; sequence MSSKRPCSIVGSFWMLWIWTATSMVARA. At 29-212 the chain is on the extracellular side; the sequence is VILHPNETIF…EDEHSDMHSY (184 aa). An N-linked (GlcNAc...) asparagine glycan is attached at Asn34. Disulfide bonds link Cys42–Cys157, Cys48–Cys112, Cys56–Cys105, Cys96–Cys132, and Cys125–Cys147. An FZ domain is found at 43-160; the sequence is KKSTTCEVLK…EQFPKGCQNE (118 aa). Residue Asp73 coordinates cholesterol. N-linked (GlcNAc...) asparagine glycosylation occurs at Asn167. Intrachain disulfides connect Cys172/Cys192, Cys196/Cys274, and Cys293/Cys369. Residues 213–233 form a helical membrane-spanning segment; that stretch reads IAVFGTITLLCTFFTLATFLA. Over 234–241 the chain is Cytoplasmic; sequence DWKNSNRY. A helical transmembrane segment spans residues 242–262; that stretch reads PAVILFYVNACFFIGSIGWLA. Residues 263-293 lie on the Extracellular side of the membrane; the sequence is QFMDGARNEIVCKSDNTMRLGEPSSTETLSC. A helical membrane pass occupies residues 294–314; sequence VIIFVIVYYSLMSGVIWFVML. Residues 315 to 335 lie on the Cytoplasmic side of the membrane; that stretch reads TYAWHTSFKALGTTHQPLSGK. The chain crosses the membrane as a helical span at residues 336-356; that stretch reads TSYFHLVTWSIPFILTVAILA. Residues 357 to 381 are Extracellular-facing; it reads NSQVDADSVSGICFVGYRYYEYRAG. Tyr373 provides a ligand contact to cholesterol. Residues 382-402 traverse the membrane as a helical segment; it reads FVLAPIGFVLVIGGYFLIRGV. Over 403-430 the chain is Cytoplasmic; the sequence is MTLFSIKSNHPGLLSEKAASKINETMLR. A helical transmembrane segment spans residues 431–451; it reads LGIFGFLAFGFVLITFGCHFY. Residues 452–503 lie on the Extracellular side of the membrane; the sequence is DFFNQAEWERSFREYVLCEANVTIAHQTNKPIPECAIKNRPSLLVGKINLFS. Cys469 and Cys486 are joined by a disulfide. Asn472 carries N-linked (GlcNAc...) asparagine glycosylation. A helical transmembrane segment spans residues 504–524; sequence MFGTGIAMSTWVWTKATILIW. Residues 525–822 lie on the Cytoplasmic side of the membrane; it reads KRTWFRIIGR…AELLDADSDF (298 aa). The interval 645-687 is disordered; that stretch reads MMKRKKKKKKRRKEVRPAGPAADEGNPAYHRREFGPSAVPRLP. Positions 647–658 are enriched in basic residues; it reads KRKKKKKKRRKE.

Belongs to the G-protein coupled receptor Fz/Smo family. Monomer.

It is found in the cell membrane. The protein localises to the cell projection. Its subcellular location is the cilium. Functionally, g protein-coupled receptor which associates with the patched protein (ptch) to transduce Hedgehog protein signaling. Binding of sonic hedgehog (shh) to its receptor patched prevents inhibition of smoothened (smo) by patched. When active, smo binds to and sequesters protein kinase A catalytic subunit prkaca at the cell membrane, preventing prkaca-mediated phosphorylation of gli transcription factors which releases the gli proteins from prkaca-mediated inhibition and allows for transcriptional activation of Hedgehog signaling pathway target genes. Required for the development of primary and secondary motoneurons but not for the specification of midbrain dopaminergic neurons or development of the medial floor plate. Required for induction of lateral floor plate and posterior motoneurons, anterior neural plate patterning, dorsoventral forebrain patterning, dorsoventral retinal patterning, optic stalk development, and formation of the forebrain primary axonal scaffold. Required to regulate the formation of a subset of cerebellar neurons by limiting wnt1 expression which controls cerebellar expression of transcription factor olig2. Required for development of the pancreas. Required for muscle development. Required for the formation of a single continuous intestinal lumen from multiple discontinuous lumens, probably by regulating remodeling through rab11a-mediated trafficking to facilitate lumen fusion. Required for development of the adenohypophysis. Required for anteroposterior patterning of the otic vesicle. Required for development of the anterior craniofacial skeleton. Required for patterning of the caudal fin. Required during gastrulation and early somitogenesis stages to promote cardiomyocyte formation by regulating the specification of myocardial progenitors. Required for induction of arterial endothelial cell formation by repressing venous cell fate. This chain is Protein smoothened, found in Danio rerio (Zebrafish).